The following is a 144-amino-acid chain: Probable subtilase-type protease inhibitor (144 aa).

An N-terminal signal peptide occupies residues 1–34 (MPNTARWAVTLTLTATAVCGPLAGASLATPNAAA). Cystine bridges form between C66-C81 and C102-C132.

The protein belongs to the protease inhibitor I16 (SSI) family. In terms of assembly, homodimer.

It is found in the secreted. Its function is as follows. Strong inhibitor of bacterial serine proteases such as subtilisin. This Streptomyces avermitilis (strain ATCC 31267 / DSM 46492 / JCM 5070 / NBRC 14893 / NCIMB 12804 / NRRL 8165 / MA-4680) protein is Probable subtilase-type protease inhibitor (sti1).